The primary structure comprises 503 residues: Probable protein kinase UbiB (503 aa).

A helical transmembrane segment spans residues 13–35 (TFYRYRLAGLCASLMGSGWICAL). The Protein kinase domain maps to 120–491 (EFETEPIASA…QQRQSLWLAV (372 aa)). ATP is bound by residues 126–134 (IASASIAQV) and lysine 148. Aspartate 283 (proton acceptor) is an active-site residue. A helical membrane pass occupies residues 485-502 (QSLWLAVIAVVLLLILLL).

The protein belongs to the ABC1 family. UbiB subfamily.

It localises to the cell inner membrane. It participates in cofactor biosynthesis; ubiquinone biosynthesis [regulation]. In terms of biological role, is probably a protein kinase regulator of UbiI activity which is involved in aerobic coenzyme Q (ubiquinone) biosynthesis. The sequence is that of Probable protein kinase UbiB from Neisseria meningitidis serogroup A / serotype 4A (strain DSM 15465 / Z2491).